We begin with the raw amino-acid sequence, 480 residues long: Ribulose bisphosphate carboxylase large chain (480 aa).

The propeptide occupies 1–2; that stretch reads MS. Proline 3 bears the N-acetylproline mark. N6,N6,N6-trimethyllysine is present on lysine 14. Substrate contacts are provided by asparagine 123 and threonine 173. The active-site Proton acceptor is the lysine 175. Lysine 177 contacts substrate. Positions 201, 203, and 204 each coordinate Mg(2+). Lysine 201 is subject to N6-carboxylysine. Residue histidine 294 is the Proton acceptor of the active site. Arginine 295, histidine 327, and serine 379 together coordinate substrate.

Belongs to the RuBisCO large chain family. Type I subfamily. Heterohexadecamer of 8 large chains and 8 small chains; disulfide-linked. The disulfide link is formed within the large subunit homodimers. Requires Mg(2+) as cofactor. In terms of processing, the disulfide bond which can form in the large chain dimeric partners within the hexadecamer appears to be associated with oxidative stress and protein turnover.

The protein resides in the plastid. The protein localises to the chloroplast. The catalysed reaction is 2 (2R)-3-phosphoglycerate + 2 H(+) = D-ribulose 1,5-bisphosphate + CO2 + H2O. It carries out the reaction D-ribulose 1,5-bisphosphate + O2 = 2-phosphoglycolate + (2R)-3-phosphoglycerate + 2 H(+). Its function is as follows. RuBisCO catalyzes two reactions: the carboxylation of D-ribulose 1,5-bisphosphate, the primary event in carbon dioxide fixation, as well as the oxidative fragmentation of the pentose substrate in the photorespiration process. Both reactions occur simultaneously and in competition at the same active site. This chain is Ribulose bisphosphate carboxylase large chain, found in Phalaenopsis aphrodite subsp. formosana (Moth orchid).